The following is a 110-amino-acid chain: Insulin (110 aa).

The N-terminal stretch at 1 to 24 (MALWMRLLPLLALLALWGPDPAQA) is a signal peptide. Intrachain disulfides connect C31–C96, C43–C109, and C95–C100. A propeptide spans 57 to 87 (EAEDLQVGQVELGGGPGAGSLQPLALEGSLQ) (c peptide).

Belongs to the insulin family. Heterodimer of a B chain and an A chain linked by two disulfide bonds.

It localises to the secreted. Its function is as follows. Insulin decreases blood glucose concentration. It increases cell permeability to monosaccharides, amino acids and fatty acids. It accelerates glycolysis, the pentose phosphate cycle, and glycogen synthesis in liver. The polypeptide is Insulin (INS) (Pongo pygmaeus (Bornean orangutan)).